The following is a 446-amino-acid chain: Mitochondrial distribution and morphology protein 12 (446 aa).

The region spanning 1 to 446 (MSIDINWEAA…VYPSFWTFLV (446 aa)) is the SMP-LTD domain. The segment covering 75–85 (DNEIGDGEVSD) has biased composition (acidic residues). Disordered regions lie at residues 75–106 (DNEI…SAAD), 126–145 (PHDV…PIRS), and 188–283 (TPLS…RVRE). Positions 126–138 (PHDVPIPSKEDPL) are enriched in basic and acidic residues. Residues 233 to 246 (TGNSRPSTADTLDS) show a composition bias toward polar residues. Residues 260–274 (SSDDAHPNVLPRRDN) show a composition bias toward basic and acidic residues.

The protein belongs to the MDM12 family. In terms of assembly, component of the ER-mitochondria encounter structure (ERMES) or MDM complex, composed of MMM1, MDM10, MDM12 and MDM34. An MMM1 homodimer associates with one molecule of MDM12 on each side in a pairwise head-to-tail manner, and the SMP-LTD domains of MMM1 and MDM12 generate a continuous hydrophobic tunnel for phospholipid trafficking.

Its subcellular location is the mitochondrion outer membrane. The protein localises to the endoplasmic reticulum membrane. Its function is as follows. Component of the ERMES/MDM complex, which serves as a molecular tether to connect the endoplasmic reticulum (ER) and mitochondria. Components of this complex are involved in the control of mitochondrial shape and protein biogenesis, and function in nonvesicular lipid trafficking between the ER and mitochondria. MDM12 is required for the interaction of the ER-resident membrane protein MMM1 and the outer mitochondrial membrane-resident beta-barrel protein MDM10. The MDM12-MMM1 subcomplex functions in the major beta-barrel assembly pathway that is responsible for biogenesis of all mitochondrial outer membrane beta-barrel proteins, and acts in a late step after the SAM complex. The MDM10-MDM12-MMM1 subcomplex further acts in the TOM40-specific pathway after the action of the MDM12-MMM1 complex. Essential for establishing and maintaining the structure of mitochondria and maintenance of mtDNA nucleoids. The chain is Mitochondrial distribution and morphology protein 12 from Coccidioides immitis (strain RS) (Valley fever fungus).